The primary structure comprises 156 residues: Phosphopantetheine adenylyltransferase (156 aa).

A substrate-binding site is contributed by Thr-10. ATP-binding positions include Thr-10 to Phe-11 and His-18. 3 residues coordinate substrate: Lys-42, Leu-74, and Arg-88. ATP contacts are provided by residues Gly-89–Arg-91, Glu-99, and Asn-124–Ser-130.

The protein belongs to the bacterial CoaD family. As to quaternary structure, homohexamer. Mg(2+) serves as cofactor.

The protein localises to the cytoplasm. It catalyses the reaction (R)-4'-phosphopantetheine + ATP + H(+) = 3'-dephospho-CoA + diphosphate. It functions in the pathway cofactor biosynthesis; coenzyme A biosynthesis; CoA from (R)-pantothenate: step 4/5. Its function is as follows. Reversibly transfers an adenylyl group from ATP to 4'-phosphopantetheine, yielding dephospho-CoA (dPCoA) and pyrophosphate. The protein is Phosphopantetheine adenylyltransferase of Campylobacter concisus (strain 13826).